Here is an 81-residue protein sequence, read N- to C-terminus: Defensin-like protein 43 (81 aa).

The first 27 residues, Met1–Ala27, serve as a signal peptide directing secretion. Intrachain disulfides connect Cys40–Cys79, Cys44–Cys67, Cys53–Cys77, and Cys57–Cys78.

It belongs to the DEFL family.

Its subcellular location is the secreted. The sequence is that of Defensin-like protein 43 from Arabidopsis thaliana (Mouse-ear cress).